The following is a 918-amino-acid chain: Importin subunit beta-2 (918 aa).

HEAT repeat units lie at residues 11–38 (YVLQLATLLQNCMSPNPEIRNNAMEAME), 43–92 (QPEF…GGNN), 103–137 (YVKSNIIHGLYNSNNNLVSNVTGIVITTLFSTYYR), 145–181 (GLQMLYQLLELTSNGNEPSIKALSKIMEDSAQFFQLE), 190–222 (EALLDSFFRFISNPNFSPVIRSESVKCINTVIP), 235–263 (FLEIIFQLAQNDENDLVRAQICISFSFLL), 275–303 (DGIVQFMLHLITTVNEEKVAIEACEFLHA), 320–413 (KDIV…MTNI), 421–449 (IAFPFLREHLGSDRWFIREATILALGAMA), 461–488 (PALIPFLVEQLNDKWAPVRKMTCWTLSR), 501–534 (LIPVLEPIINTLMDKKKDVQEAAISSVAVFIENA), 542–577 (LFYSQLLTSFDKCLKYYKKKNLIILYDAIGRFAEKC), 583–620 (AMQIILPPLIEKWALLSDSDKELWPLLECLSCVASSLG), 628–678 (PEVY…GLGA), 694–725 (ILKIMLECLQDPVHEVRQSCFALLGDIVYFFN), 777–814 (IDMSRIILDLFTTNTQIVDSSVMENLSVTIGKMGLTHP), 825–858 (DSNWNKWCLSVNALDDVEEKSSAYMGFLKIINLT), and 867–900 (DTIHKIVTGLSSNVEANVFAQEIYTFLMNHSAQI). The interval 361–395 (APRIVKKKEAGNGEDADDNEDDDDDDDDEDGDVDT) is disordered. Residues 372–393 (NGEDADDNEDDDDDDDDEDGDV) are compositionally biased toward acidic residues.

Belongs to the importin beta family. Importin beta-2 subfamily. In terms of assembly, interacts with Ran (GSP1); interacts specifically with the GTP-bound form of Ran (GTP-Ran), protecting it from GTP hydrolysis and nucleotide exchange. Interacts with nucleoporins NUP1, NUP100 and NUP116. Interacts with NAB2 and HRP1/NAB4; via their rg-NLS. Interacts with TFG2; via its PY-NLS.

The protein resides in the cytoplasm. The protein localises to the nucleus. It is found in the nuclear pore complex. In terms of biological role, functions in nuclear protein import as nuclear transport receptor. Serves as receptor for arginine/glycine-rich nuclear localization signals (rg-NLS) and PY-NLS in cargo substrates. Its predominant cargo substrate seems to be mRNA-binding proteins. Required for nuclear transport of NAB2, HRP1/NAB4 and TFG2. Mediates docking of the importin/substrate complex to the nuclear pore complex (NPC) through binding to repeat-containing nucleoporins. The complex is subsequently translocated through the pore by an energy requiring, Ran-dependent mechanism. At the nucleoplasmic side of the NPC, GTP-Ran binding leads to release of the cargo. Efficient GTP-Ran-mediated substrate release requires RNA. The importin is re-exported from the nucleus to the cytoplasm where GTP hydrolysis releases Ran from importin. The directionality of nuclear import is thought to be conferred by an asymmetric distribution of the GTP- and GDP-bound forms of Ran between the cytoplasm and nucleus. The polypeptide is Importin subunit beta-2 (Saccharomyces cerevisiae (strain ATCC 204508 / S288c) (Baker's yeast)).